The sequence spans 874 residues: S-layer protein (874 aa).

A signal peptide spans 1 to 30; the sequence is MAKTNSYKKVIAGTMTAAMVAGVVSPVAAA. SLH domains follow at residues 31 to 93, 94 to 151, and 152 to 214; these read GKSF…NAQP, SFKD…KVDG, and TLVT…ENSD.

The protein resides in the secreted. The protein localises to the cell wall. It is found in the S-layer. The S-layer is a paracrystalline mono-layered assembly of proteins which coat the surface of bacteria. This Bacillus licheniformis protein is S-layer protein.